A 321-amino-acid chain; its full sequence is Ribosomal RNA small subunit methyltransferase H (321 aa).

S-adenosyl-L-methionine is bound by residues 43-45, aspartate 63, phenylalanine 89, aspartate 110, and glutamine 117; that span reads GGH. The interval 286–321 is disordered; that stretch reads HPAGKALRAGPRETRDNPRSRSAVLRVAERSERHAA. Basic and acidic residues-rich tracts occupy residues 295-304 and 312-321; these read GPRETRDNPR and VAERSERHAA.

It belongs to the methyltransferase superfamily. RsmH family.

It is found in the cytoplasm. The catalysed reaction is cytidine(1402) in 16S rRNA + S-adenosyl-L-methionine = N(4)-methylcytidine(1402) in 16S rRNA + S-adenosyl-L-homocysteine + H(+). Specifically methylates the N4 position of cytidine in position 1402 (C1402) of 16S rRNA. The sequence is that of Ribosomal RNA small subunit methyltransferase H from Acidithiobacillus ferrooxidans (strain ATCC 23270 / DSM 14882 / CIP 104768 / NCIMB 8455) (Ferrobacillus ferrooxidans (strain ATCC 23270)).